Reading from the N-terminus, the 273-residue chain is Formamidopyrimidine-DNA glycosylase (273 aa).

Proline 2 serves as the catalytic Schiff-base intermediate with DNA. Residue glutamate 3 is the Proton donor of the active site. Lysine 58 functions as the Proton donor; for beta-elimination activity in the catalytic mechanism. 2 residues coordinate DNA: histidine 91 and arginine 110. The segment at 238–272 (QVYGKTGQPCPRCASMIVKIKLGGRGTHLCPHCQK) adopts an FPG-type zinc-finger fold. The active-site Proton donor; for delta-elimination activity is arginine 262.

It belongs to the FPG family. As to quaternary structure, monomer. It depends on Zn(2+) as a cofactor.

It carries out the reaction Hydrolysis of DNA containing ring-opened 7-methylguanine residues, releasing 2,6-diamino-4-hydroxy-5-(N-methyl)formamidopyrimidine.. It catalyses the reaction 2'-deoxyribonucleotide-(2'-deoxyribose 5'-phosphate)-2'-deoxyribonucleotide-DNA = a 3'-end 2'-deoxyribonucleotide-(2,3-dehydro-2,3-deoxyribose 5'-phosphate)-DNA + a 5'-end 5'-phospho-2'-deoxyribonucleoside-DNA + H(+). In terms of biological role, involved in base excision repair of DNA damaged by oxidation or by mutagenic agents. Acts as a DNA glycosylase that recognizes and removes damaged bases. Has a preference for oxidized purines, such as 7,8-dihydro-8-oxoguanine (8-oxoG). Has AP (apurinic/apyrimidinic) lyase activity and introduces nicks in the DNA strand. Cleaves the DNA backbone by beta-delta elimination to generate a single-strand break at the site of the removed base with both 3'- and 5'-phosphates. This is Formamidopyrimidine-DNA glycosylase from Streptococcus thermophilus (strain ATCC BAA-250 / LMG 18311).